The chain runs to 357 residues: UDP-N-acetylglucosamine--N-acetylmuramyl-(pentapeptide) pyrophosphoryl-undecaprenol N-acetylglucosamine transferase (357 aa).

UDP-N-acetyl-alpha-D-glucosamine contacts are provided by residues threonine 12–glycine 14, asparagine 124, arginine 162, serine 190, isoleucine 244, alanine 263–glutamate 268, and glutamine 289.

It belongs to the glycosyltransferase 28 family. MurG subfamily.

Its subcellular location is the cell inner membrane. It catalyses the reaction di-trans,octa-cis-undecaprenyl diphospho-N-acetyl-alpha-D-muramoyl-L-alanyl-D-glutamyl-meso-2,6-diaminopimeloyl-D-alanyl-D-alanine + UDP-N-acetyl-alpha-D-glucosamine = di-trans,octa-cis-undecaprenyl diphospho-[N-acetyl-alpha-D-glucosaminyl-(1-&gt;4)]-N-acetyl-alpha-D-muramoyl-L-alanyl-D-glutamyl-meso-2,6-diaminopimeloyl-D-alanyl-D-alanine + UDP + H(+). It functions in the pathway cell wall biogenesis; peptidoglycan biosynthesis. In terms of biological role, cell wall formation. Catalyzes the transfer of a GlcNAc subunit on undecaprenyl-pyrophosphoryl-MurNAc-pentapeptide (lipid intermediate I) to form undecaprenyl-pyrophosphoryl-MurNAc-(pentapeptide)GlcNAc (lipid intermediate II). The protein is UDP-N-acetylglucosamine--N-acetylmuramyl-(pentapeptide) pyrophosphoryl-undecaprenol N-acetylglucosamine transferase of Alkalilimnicola ehrlichii (strain ATCC BAA-1101 / DSM 17681 / MLHE-1).